Consider the following 321-residue polypeptide: Torsin-2A (321 aa).

The N-terminal stretch at 1–26 is a signal peptide; the sequence is MAVARHGYRPWGSILGLLGLALAAAA. ATP is bound at residue 93 to 100; that stretch reads GWTGTGKS. N149 carries an N-linked (GlcNAc...) asparagine glycan.

Belongs to the ClpA/ClpB family. Torsin subfamily. As to quaternary structure, homohexamer. Interacts with TOR1AIP1. In terms of processing, N-glycosylated. In terms of tissue distribution, expressed at similar levels in liver, muscle and brain (at protein level).

The protein resides in the endoplasmic reticulum lumen. The chain is Torsin-2A (Tor2a) from Mus musculus (Mouse).